We begin with the raw amino-acid sequence, 366 residues long: Inhibin alpha chain (366 aa).

A signal peptide spans 1 to 20; it reads MVIQPSLLLLLLLTLQDVDS. A propeptide spanning residues 21 to 63 is cleaved from the precursor; sequence CQGPELVRELVLAKVKALFLDALGPPAMDGEGGGPGIRRLPRR. Residues 64-233 constitute a propeptide, inhibin alpha N-terminal region; that stretch reads HALGGFMHRT…APSAGERARR (170 aa). Asparagine 147 and asparagine 269 each carry an N-linked (GlcNAc...) asparagine glycan. Intrachain disulfides connect cysteine 263–cysteine 328, cysteine 292–cysteine 363, and cysteine 296–cysteine 365.

It belongs to the TGF-beta family. As to quaternary structure, dimeric, linked by one or more disulfide bonds. Activin B is a dimer of alpha and beta-B. Inhibin A is a dimer of alpha and beta-A. Inhibin B is a dimer of alpha and beta-B. Interacts with TGFBR3L; this interaction regulates female fertility. Post-translationally, proteolytic processing yields a number of bioactive forms, consisting either solely of the mature alpha chain, of the most N-terminal propeptide linked through a disulfide bond to the mature alpha chain, or of the entire proprotein. As to expression, mainly expressed in ovary and testis. Alpha- and beta-B-subunits are the predominant forms found in testis. Also found in placenta, pituitary, adrenal gland, bone marrow, kidney, spinal cord and brain.

The protein resides in the secreted. Its function is as follows. Inhibins and activins inhibit and activate, respectively, the secretion of follitropin by the pituitary gland. Inhibins/activins are involved in regulating a number of diverse functions such as hypothalamic and pituitary hormone secretion, gonadal hormone secretion, germ cell development and maturation, erythroid differentiation, insulin secretion, nerve cell survival, embryonic axial development or bone growth, depending on their subunit composition. Inhibins appear to oppose the functions of activins. In terms of biological role, inhibin A is a dimer of alpha/INHA and beta-A/INHBA that functions as a feedback regulator in the hypothalamic-pituitary-gonadal (HPG) axis. Inhibits the secretion of FSH from the anterior pituitary gland by acting on pituitary gonadotrope cells. Antagonizes activin A by binding to the proteoglycan, betaglycan, and forming a stable complex with and, thereby, sequestering type II activin receptors while excluding type I receptor. Functionally, inhibin B is a dimer of alpha and beta-B that plays a crucial role in the regulation of the reproductive system by inhibiting the secretion of follicle-stimulating hormone (FSH) from the anterior pituitary gland. Thereby, maintains reproductive homeostasis in both males and females. Acts as a more potent suppressor of FSH release than inhibin A. Functions as competitive receptor antagonist binding activin type II receptors with high affinity in the presence of the TGF-beta type III coreceptor/TGFBR3L. The protein is Inhibin alpha chain (Inha) of Rattus norvegicus (Rat).